Reading from the N-terminus, the 221-residue chain is Orotate phosphoribosyltransferase (221 aa).

K26 is a 5-phospho-alpha-D-ribose 1-diphosphate binding site. Position 34–35 (34–35) interacts with orotate; the sequence is FF. Residues 72–73, R98, K99, K102, H104, and 123–131 each bind 5-phospho-alpha-D-ribose 1-diphosphate; these read YK and DDVISAGTS. 2 residues coordinate orotate: S127 and R155.

Belongs to the purine/pyrimidine phosphoribosyltransferase family. PyrE subfamily. In terms of assembly, homodimer. Mg(2+) is required as a cofactor.

The enzyme catalyses orotidine 5'-phosphate + diphosphate = orotate + 5-phospho-alpha-D-ribose 1-diphosphate. The protein operates within pyrimidine metabolism; UMP biosynthesis via de novo pathway; UMP from orotate: step 1/2. Catalyzes the transfer of a ribosyl phosphate group from 5-phosphoribose 1-diphosphate to orotate, leading to the formation of orotidine monophosphate (OMP). This chain is Orotate phosphoribosyltransferase, found in Herminiimonas arsenicoxydans.